The chain runs to 658 residues: Threonine--tRNA ligase (658 aa).

The 64-residue stretch at 1–64 folds into the TGS domain; the sequence is MSNTVSLQFP…GASGKVEIIT (64 aa). The interval 246–548 is catalytic; the sequence is DHRRLGREMD…LIENFAGHMP (303 aa). 3 residues coordinate Zn(2+): Cys343, His394, and His525.

It belongs to the class-II aminoacyl-tRNA synthetase family. As to quaternary structure, homodimer. It depends on Zn(2+) as a cofactor.

The protein resides in the cytoplasm. The enzyme catalyses tRNA(Thr) + L-threonine + ATP = L-threonyl-tRNA(Thr) + AMP + diphosphate + H(+). Functionally, catalyzes the attachment of threonine to tRNA(Thr) in a two-step reaction: L-threonine is first activated by ATP to form Thr-AMP and then transferred to the acceptor end of tRNA(Thr). Also edits incorrectly charged L-seryl-tRNA(Thr). The sequence is that of Threonine--tRNA ligase from Brucella melitensis biotype 2 (strain ATCC 23457).